We begin with the raw amino-acid sequence, 540 residues long: MNKEISTADILSGGESYSGISAVEKNAKAMMKVYNAIKTSFGPLGLDKMCVDSAGEVSITNDGATILQNMLIDDPAAKILVDLATQQDHEVGDGTTSVVLIAVSLIEKGAKLIASGVHPSVVVSGYKMAFNECVQFIKKSMSKSTLNLGSKALRNVVETSISSKVISSESEVFCGIVIDALKCIESVDENRKNMYPIEDINILKHPGGSMKESFLHQGYALNCSLASNFMKRQVKKPKILCIDFGLQKYKNPLTVSIVVDDPNKLEDIRKKELEITRRQIKTIIDSGANVVLTTRGIDDMCTKLLVEADVVGIRRCKKEDLLVIAKATGTSLVSSIADISGADSISSLGFADKFEVVQIGEEECVLINGLKKKMASIILRGANCQLLDEMQRSVHDAVCVLKRTLESNSVVPGGGAVECALSLMLEKFAFTVNSKEHVAIHRYAESLLSIPKILSTNAGLDSNELVANLLSSQSREMANSSGSKFLGIDVTSGKIQDNFEFGIIEPSVNKMKSLKAATEAAISILRINEVIILPPDQSKN.

This sequence belongs to the TCP-1 chaperonin family. Component of the T-complex protein 1 (TCP1) complex.

Its subcellular location is the cytoplasm. In terms of biological role, molecular chaperone; assists the folding of proteins upon ATP hydrolysis. The protein is T-complex protein 1 subunit alpha (TCP1) of Encephalitozoon cuniculi (strain GB-M1) (Microsporidian parasite).